Reading from the N-terminus, the 240-residue chain is Large ribosomal subunit protein uL3 (240 aa).

Disordered regions lie at residues Ser138 to Lys158 and Glu215 to Gly240. Residue Gln151 is modified to N5-methylglutamine.

This sequence belongs to the universal ribosomal protein uL3 family. Part of the 50S ribosomal subunit. Forms a cluster with proteins L14 and L19. Methylated by PrmB.

One of the primary rRNA binding proteins, it binds directly near the 3'-end of the 23S rRNA, where it nucleates assembly of the 50S subunit. This chain is Large ribosomal subunit protein uL3, found in Beijerinckia indica subsp. indica (strain ATCC 9039 / DSM 1715 / NCIMB 8712).